The following is a 346-amino-acid chain: Methylthioribose-1-phosphate isomerase (346 aa).

Residues Arg-54–Ala-56, Arg-91, and Gln-192 contribute to the substrate site. Asp-233 acts as the Proton donor in catalysis. Asn-243 to Lys-244 contacts substrate.

Belongs to the eIF-2B alpha/beta/delta subunits family. MtnA subfamily.

The enzyme catalyses 5-(methylsulfanyl)-alpha-D-ribose 1-phosphate = 5-(methylsulfanyl)-D-ribulose 1-phosphate. It participates in amino-acid biosynthesis; L-methionine biosynthesis via salvage pathway; L-methionine from S-methyl-5-thio-alpha-D-ribose 1-phosphate: step 1/6. In terms of biological role, catalyzes the interconversion of methylthioribose-1-phosphate (MTR-1-P) into methylthioribulose-1-phosphate (MTRu-1-P). This chain is Methylthioribose-1-phosphate isomerase, found in Yersinia enterocolitica serotype O:8 / biotype 1B (strain NCTC 13174 / 8081).